The primary structure comprises 104 residues: DNA-directed RNA polymerase subunit Rpo13 (104 aa).

Disordered regions lie at residues 1-34 and 76-104; these read MVSG…EEFP and EKRD…SVEG. Acidic residues predominate over residues 7–31; that stretch reads TEEEKEGTNDEEVSEEREVEETSEE. E32 contributes to the DNA binding site. Over residues 80–104 the composition is skewed to basic residues; the sequence is SRRKAKKAASKKVKKTKKKEKSVEG. The required to bind DNA stretch occupies residues 81–104; that stretch reads RRKAKKAASKKVKKTKKKEKSVEG.

The protein belongs to the archaeal Rpo13 RNA polymerase subunit family. In terms of assembly, part of the 13-subunit RNA polymerase complex. Rpo1N and Rpo5 form a cleft which docks Rpo13. Forms predominantly dimers in solution, although monomers and trimers can also be seen. Found associated with RNAP but also as a homodimer pool in the cytoplasm in vivo.

Its subcellular location is the cytoplasm. It catalyses the reaction RNA(n) + a ribonucleoside 5'-triphosphate = RNA(n+1) + diphosphate. Functionally, DNA-dependent RNA polymerase (RNAP) catalyzes the transcription of DNA into RNA using the four ribonucleoside triphosphates as substrates. A molten-globule protein, it binds dsDNA in the RNAP, in vitro binds dsDNA but not ssDNA. Its position in RNAP implies it functions in both transcription initiation and elongation. This chain is DNA-directed RNA polymerase subunit Rpo13, found in Saccharolobus shibatae (strain ATCC 51178 / DSM 5389 / JCM 8931 / NBRC 15437 / B12) (Sulfolobus shibatae).